Here is a 116-residue protein sequence, read N- to C-terminus: Large ribosomal subunit protein uL18 (116 aa).

It belongs to the universal ribosomal protein uL18 family. As to quaternary structure, part of the 50S ribosomal subunit; part of the 5S rRNA/L5/L18/L25 subcomplex. Contacts the 5S and 23S rRNAs.

Functionally, this is one of the proteins that bind and probably mediate the attachment of the 5S RNA into the large ribosomal subunit, where it forms part of the central protuberance. In Shewanella baltica (strain OS223), this protein is Large ribosomal subunit protein uL18.